Here is a 248-residue protein sequence, read N- to C-terminus: Trihelix transcription factor ENAP2 (248 aa).

A compositionally biased stretch (polar residues) spans 1-13 (METTTPQSKSSVS). The tract at residues 1–20 (METTTPQSKSSVSHRPPLGR) is disordered. The segment at residues 24–113 (WSEEATATLV…RLDVLIGPVV (90 aa)) is a DNA-binding region (MADF). The Nuclear localization signal signature appears at 69–76 (RKKTDLQC). The segment at 123-150 (SAPFKNHLNPTGSNSTGSSLEDDDEDDD) is disordered. A compositionally biased stretch (polar residues) spans 130–141 (LNPTGSNSTGSS). Positions 190–210 (YERIEGKKQQMMIELEKQRME) form a coiled coil.

In terms of assembly, interacts with the Agrobacterium tumefaciens virulence protein F (VirF) in the nucleus. Binds to EIN2 C-terminal region in the presence of ethylene.

The protein resides in the nucleus. The protein localises to the nucleoplasm. Probable transcription regulator. Promotes histone acetylation during ethylene signaling in an EIN2-dependent manner, thus regulating positively ethylene-responsive genes. The chain is Trihelix transcription factor ENAP2 from Arabidopsis thaliana (Mouse-ear cress).